The chain runs to 416 residues: Multifunctional CCA protein (416 aa).

Positions 8 and 11 each coordinate ATP. CTP-binding residues include G8 and R11. Mg(2+)-binding residues include D21 and D23. R91, R137, and R140 together coordinate ATP. Residues R91, R137, and R140 each coordinate CTP. An HD domain is found at 228–329; the sequence is TGVHTLMVLA…VKIFDKADFW (102 aa).

The protein belongs to the tRNA nucleotidyltransferase/poly(A) polymerase family. Bacterial CCA-adding enzyme type 1 subfamily. Monomer. Can also form homodimers and oligomers. The cofactor is Mg(2+). Ni(2+) is required as a cofactor.

The enzyme catalyses a tRNA precursor + 2 CTP + ATP = a tRNA with a 3' CCA end + 3 diphosphate. It catalyses the reaction a tRNA with a 3' CCA end + 2 CTP + ATP = a tRNA with a 3' CCACCA end + 3 diphosphate. Catalyzes the addition and repair of the essential 3'-terminal CCA sequence in tRNAs without using a nucleic acid template. Adds these three nucleotides in the order of C, C, and A to the tRNA nucleotide-73, using CTP and ATP as substrates and producing inorganic pyrophosphate. tRNA 3'-terminal CCA addition is required both for tRNA processing and repair. Also involved in tRNA surveillance by mediating tandem CCA addition to generate a CCACCA at the 3' terminus of unstable tRNAs. While stable tRNAs receive only 3'-terminal CCA, unstable tRNAs are marked with CCACCA and rapidly degraded. This is Multifunctional CCA protein from Shewanella baltica (strain OS185).